The chain runs to 241 residues: 1-(5-phosphoribosyl)-5-[(5-phosphoribosylamino)methylideneamino] imidazole-4-carboxamide isomerase (241 aa).

Catalysis depends on Asp-10, which acts as the Proton acceptor. Asp-131 serves as the catalytic Proton donor.

The protein belongs to the HisA/HisF family.

The protein resides in the cytoplasm. It carries out the reaction 1-(5-phospho-beta-D-ribosyl)-5-[(5-phospho-beta-D-ribosylamino)methylideneamino]imidazole-4-carboxamide = 5-[(5-phospho-1-deoxy-D-ribulos-1-ylimino)methylamino]-1-(5-phospho-beta-D-ribosyl)imidazole-4-carboxamide. The protein operates within amino-acid biosynthesis; L-histidine biosynthesis; L-histidine from 5-phospho-alpha-D-ribose 1-diphosphate: step 4/9. The chain is 1-(5-phosphoribosyl)-5-[(5-phosphoribosylamino)methylideneamino] imidazole-4-carboxamide isomerase from Bifidobacterium longum (strain NCC 2705).